A 338-amino-acid chain; its full sequence is MYG1 protein YER156C (338 aa).

Belongs to the MYG1 family.

This Saccharomyces cerevisiae (strain ATCC 204508 / S288c) (Baker's yeast) protein is MYG1 protein YER156C.